Reading from the N-terminus, the 103-residue chain is Large ribosomal subunit protein uL24 (103 aa).

This sequence belongs to the universal ribosomal protein uL24 family. Part of the 50S ribosomal subunit.

Functionally, one of two assembly initiator proteins, it binds directly to the 5'-end of the 23S rRNA, where it nucleates assembly of the 50S subunit. In terms of biological role, one of the proteins that surrounds the polypeptide exit tunnel on the outside of the subunit. In Enterococcus faecalis (strain ATCC 700802 / V583), this protein is Large ribosomal subunit protein uL24.